Reading from the N-terminus, the 749-residue chain is 5-methyltetrahydropteroyltriglutamate--homocysteine methyltransferase (749 aa).

Residues 15–18 and Lys114 each bind 5-methyltetrahydropteroyltri-L-glutamate; that span reads RELK. L-homocysteine is bound by residues 425–427 and Glu478; that span reads IGS. L-methionine is bound by residues 425–427 and Glu478; that span reads IGS. Trp555 contributes to the 5-methyltetrahydropteroyltri-L-glutamate binding site. Asp593 is an L-homocysteine binding site. Asp593 contributes to the L-methionine binding site. Position 599 (Glu599) interacts with 5-methyltetrahydropteroyltri-L-glutamate. Residues His636, Cys638, and Glu660 each contribute to the Zn(2+) site. His689 (proton donor) is an active-site residue. Cys721 contacts Zn(2+).

The protein belongs to the vitamin-B12 independent methionine synthase family. The cofactor is Zn(2+).

The enzyme catalyses 5-methyltetrahydropteroyltri-L-glutamate + L-homocysteine = tetrahydropteroyltri-L-glutamate + L-methionine. It participates in amino-acid biosynthesis; L-methionine biosynthesis via de novo pathway; L-methionine from L-homocysteine (MetE route): step 1/1. In terms of biological role, catalyzes the transfer of a methyl group from 5-methyltetrahydrofolate to homocysteine resulting in methionine formation. The sequence is that of 5-methyltetrahydropteroyltriglutamate--homocysteine methyltransferase from Streptococcus pneumoniae serotype 2 (strain D39 / NCTC 7466).